An 802-amino-acid polypeptide reads, in one-letter code: Chondroitin sulfate synthase 1 (802 aa).

Residues 1 to 7 (MAARGRR) are Cytoplasmic-facing. The helical; Signal-anchor for type II membrane protein transmembrane segment at 8–28 (AWLSVLLGLVLGFVLASRLVL) threads the bilayer. Residues 29–802 (PRASELKRAG…SNNNGSVRTA (774 aa)) lie on the Lumenal side of the membrane. Positions 34–82 (LKRAGPRRRASPEGCRSGQAAASQAGGARGDARGAQLWPPGSDPDGGPR) are disordered. Low complexity-rich tracts occupy residues 49–59 (RSGQAAASQAG) and 66–78 (RGAQ…SDPD). Residues Asn-189 and Asn-623 are each glycosylated (N-linked (GlcNAc...) asparagine). Residues Asp-633 and His-747 each coordinate a divalent metal cation. Asn-796 carries an N-linked (GlcNAc...) asparagine glycan.

It belongs to the chondroitin N-acetylgalactosaminyltransferase family. Requires Co(2+) as cofactor. The cofactor is Mn(2+). Cd(2+) serves as cofactor. In terms of tissue distribution, ubiquitous, with the highest levels in placenta. Detected at low levels in brain, heart, skeletal muscle, colon, thymus, spleen, kidney, liver, adrenal gland, mammary gland, stomach, small intestine, lung and peripheral blood leukocytes.

It localises to the golgi apparatus. The protein localises to the golgi stack membrane. The protein resides in the secreted. It carries out the reaction 3-O-(beta-D-GlcA-(1-&gt;3)-beta-D-GalNAc-(1-&gt;4)-beta-D-GlcA-(1-&gt;3)-beta-D-Gal-(1-&gt;3)-beta-D-Gal-(1-&gt;4)-beta-D-Xyl)-L-seryl-[protein] + UDP-N-acetyl-alpha-D-galactosamine = 3-O-(beta-D-GalNAc-(1-&gt;4)-beta-D-GlcA-(1-&gt;3)-beta-D-GalNAc-(1-&gt;4)-beta-D-GlcA-(1-&gt;3)-beta-D-Gal-(1-&gt;3)-beta-D-Gal-(1-&gt;4)-beta-D-Xyl)-L-seryl-[protein] + UDP + H(+). It catalyses the reaction 3-O-{beta-D-GlcA-(1-&gt;3)-[beta-D-GalNAc-(1-&gt;4)-beta-D-GlcA-(1-&gt;3)](n)-beta-D-GalNAc-(1-&gt;4)-beta-D-GlcA-(1-&gt;3)-beta-D-Gal-(1-&gt;3)-beta-D-Gal-(1-&gt;4)-beta-D-Xyl}-L-seryl-[protein] + UDP-N-acetyl-alpha-D-galactosamine = 3-O-{[beta-D-GalNAc-(1-&gt;4)-beta-D-GlcA-(1-&gt;3)](n+1)-beta-D-GalNAc-(1-&gt;4)-beta-D-GlcA-(1-&gt;3)-beta-D-Gal-(1-&gt;3)-beta-D-Gal-(1-&gt;4)-beta-D-Xyl}-L-seryl-[protein] + UDP + H(+). The enzyme catalyses 3-O-(beta-D-GalNAc-(1-&gt;4)-beta-D-GlcA-(1-&gt;3)-beta-D-Gal-(1-&gt;3)-beta-D-Gal-(1-&gt;4)-beta-D-Xyl)-L-seryl-[protein] + UDP-alpha-D-glucuronate = 3-O-(beta-D-GlcA-(1-&gt;3)-beta-D-GalNAc-(1-&gt;4)-beta-D-GlcA-(1-&gt;3)-beta-D-Gal-(1-&gt;3)-beta-D-Gal-(1-&gt;4)-beta-D-Xyl)-L-seryl-[protein] + UDP + H(+). The catalysed reaction is 3-O-{[beta-D-GalNAc-(1-&gt;4)-beta-D-GlcA-(1-&gt;3)](n)-beta-D-GalNAc-(1-&gt;4)-beta-D-GlcA-(1-&gt;3)-beta-D-Gal-(1-&gt;3)-beta-D-Gal-(1-&gt;4)-beta-D-Xyl}-L-seryl-[protein] + UDP-alpha-D-glucuronate = 3-O-{beta-D-GlcA-(1-&gt;3)-[beta-D-GalNAc-(1-&gt;4)-beta-D-GlcA-(1-&gt;3)](n)-beta-D-GalNAc-(1-&gt;4)-beta-D-GlcA-(1-&gt;3)-beta-D-Gal-(1-&gt;3)-beta-D-Gal-(1-&gt;4)-beta-D-Xyl}-L-seryl-[protein] + UDP + H(+). Has both beta-1,3-glucuronic acid and beta-1,4-N-acetylgalactosamine transferase activity. Transfers glucuronic acid (GlcUA) from UDP-GlcUA and N-acetylgalactosamine (GalNAc) from UDP-GalNAc to the non-reducing end of the elongating chondroitin polymer. Involved in the negative control of osteogenesis likely through the modulation of NOTCH signaling. The sequence is that of Chondroitin sulfate synthase 1 from Homo sapiens (Human).